A 204-amino-acid polypeptide reads, in one-letter code: Holliday junction branch migration complex subunit RuvA (204 aa).

The tract at residues 1 to 67 is domain I; the sequence is MIAFLSGHLV…ETELVLYGFG (67 aa). A domain II region spans residues 68-146; sequence SPAERDVFVE…HWRQGLENAD (79 aa). The tract at residues 147–156 is flexible linker; it reads RPLAGGPPPA. Positions 156-204 are domain III; the sequence is AIREEVEMALLALGYSLQEIQAALQALPSQPRPTEEWLRDAITYLSRQP.

The protein belongs to the RuvA family. In terms of assembly, homotetramer. Forms an RuvA(8)-RuvB(12)-Holliday junction (HJ) complex. HJ DNA is sandwiched between 2 RuvA tetramers; dsDNA enters through RuvA and exits via RuvB. An RuvB hexamer assembles on each DNA strand where it exits the tetramer. Each RuvB hexamer is contacted by two RuvA subunits (via domain III) on 2 adjacent RuvB subunits; this complex drives branch migration. In the full resolvosome a probable DNA-RuvA(4)-RuvB(12)-RuvC(2) complex forms which resolves the HJ.

Its subcellular location is the cytoplasm. Its function is as follows. The RuvA-RuvB-RuvC complex processes Holliday junction (HJ) DNA during genetic recombination and DNA repair, while the RuvA-RuvB complex plays an important role in the rescue of blocked DNA replication forks via replication fork reversal (RFR). RuvA specifically binds to HJ cruciform DNA, conferring on it an open structure. The RuvB hexamer acts as an ATP-dependent pump, pulling dsDNA into and through the RuvAB complex. HJ branch migration allows RuvC to scan DNA until it finds its consensus sequence, where it cleaves and resolves the cruciform DNA. In Synechococcus sp. (strain JA-3-3Ab) (Cyanobacteria bacterium Yellowstone A-Prime), this protein is Holliday junction branch migration complex subunit RuvA.